The chain runs to 506 residues: Plant intracellular Ras-group-related LRR protein 1 (506 aa).

The tract at residues 24–48 (TAKSSSSSDVEPPPSKSDPSSSSNH) is disordered. Residues 143 to 193 (KSILKLNELHESYEKLLKEAEERLVRIYESAEKNAAAVAEEEAAEVEVNEE) adopt a coiled-coil conformation. 10 LRR repeats span residues 203–225 (ENPL…AFGK), 226–249 (IQGL…IAGL), 251–272 (NLLE…IGLL), 273–295 (SKLK…ICHC), 297–319 (SLVV…GFEL), 320–342 (VKLE…IGEM), 344–364 (SLRY…SFGL), 365–389 (LTNL…SFGD), 390–412 (LISL…AFGT), and 414–436 (VNLT…VVKQ). A GVYW motif is present at residues 437 to 449 (GVDAVKMYMGKRW).

This sequence belongs to the SHOC2 family. As to expression, widely expressed.

Leucine-rich repeat protein that likely mediates protein interactions, possibly in the context of signal transduction. PIRL1 acts redundantly with PIRL9 in the differentiation of microspores into pollen. In Arabidopsis thaliana (Mouse-ear cress), this protein is Plant intracellular Ras-group-related LRR protein 1 (PIRL1).